A 299-amino-acid chain; its full sequence is Taste receptor type 2 member 5 (299 aa).

Position 1 (Met-1) is a topological domain, extracellular. Residues 2–22 traverse the membrane as a helical segment; it reads LSAGLGLLMLVAVVEFLIGLI. Residues 23-45 are Cytoplasmic-facing; sequence GNGVLVVWSFREWIRKFSWSSYN. A helical membrane pass occupies residues 46–66; that stretch reads LIILGLAGCRFVLQWLIILDL. Topologically, residues 67 to 82 are extracellular; it reads SLFPLFQSSRWLRYLS. Residues 83–103 traverse the membrane as a helical segment; that stretch reads IFWVLVSQASLWFATFLSVFY. Over 104–127 the chain is Cytoplasmic; sequence CKKITTFDHPAYLWLKQRAYNLSL. The chain crosses the membrane as a helical span at residues 128-148; that stretch reads WCLLGYFIINLLLTVQIGLMF. Residues 149–175 lie on the Extracellular side of the membrane; the sequence is YHPPQGNSSIRYPFESWQYLYAFRLNS. An N-linked (GlcNAc...) asparagine glycan is attached at Asn-155. Residues 176-196 traverse the membrane as a helical segment; sequence GSYLPLMVFLVSSGMLIVSLY. Topologically, residues 197 to 223 are cytoplasmic; sequence THHKKMKVHSAGRRDVRAKAHITALKS. A helical membrane pass occupies residues 224 to 244; the sequence is LGCFLLLHLVYIMASPFSIAS. The Extracellular segment spans residues 245 to 253; the sequence is KTYPPDLTS. A helical membrane pass occupies residues 254-274; it reads VFIWETLMAAYPSLHSLILIM. Over 275-299 the chain is Cytoplasmic; the sequence is GIPRVKQTCQKIXWKTVCARRCWGP.

The protein belongs to the G-protein coupled receptor T2R family.

It is found in the membrane. Its function is as follows. Receptor that may play a role in the perception of bitterness and is gustducin-linked. May play a role in sensing the chemical composition of the gastrointestinal content. The activity of this receptor may stimulate alpha gustducin, mediate PLC-beta-2 activation and lead to the gating of TRPM5. The chain is Taste receptor type 2 member 5 (TAS2R5) from Pan troglodytes (Chimpanzee).